The sequence spans 1194 residues: F-box only protein 38 (1194 aa).

One can recognise an F-box domain in the interval 30 to 75 (MNQLSHEVLCHIFRYLPLQDIMCMECLSRKLKEAVTLYLRVVRVVD). Residues 59-119 (KLKEAVTLYL…LHPRYLERRR (61 aa)) are interaction with KLF7. 3 short sequence motifs (nuclear export signal) span residues 194–201 (LHLVGVNV), 307–316 (LEVDLGYLII), and 451–460 (LLPSLEFISL). Disordered regions lie at residues 487–529 (ALVS…FRPD), 577–776 (EEQA…DAES), 793–879 (RTGR…RARS), and 896–915 (KPCH…STSD). Low complexity predominate over residues 493–510 (NSNNDNDNNAPNNNANLH). Residue T592 is modified to Phosphothreonine. S599, S601, and S607 each carry phosphoserine. The segment covering 599–609 (SESDDEEDSLE) has biased composition (acidic residues). 2 stretches are compositionally biased toward basic and acidic residues: residues 622 to 631 (RYSEREEKTG) and 683 to 701 (IKAD…KSKD). Residues 705 to 728 (SCSSSSSSTAASTAGNASSPSTAS) show a composition bias toward low complexity. S742 and S746 each carry phosphoserine. Residues 764-774 (EDSEAMEEGDA) are compositionally biased toward acidic residues. Residues 793-804 (RTGRCSDEERPS) are compositionally biased toward basic and acidic residues. The segment covering 855–867 (SSQPESCDVQSNE) has biased composition (polar residues). Basic residues predominate over residues 896-906 (KPCHAMKRKRT). A Nuclear localization signal motif is present at residues 902 to 905 (KRKR).

In terms of assembly, part of the SCF (SKP1-CUL1-F-box) E3 ubiquitin-protein ligase complex SCF(FBXO38) composed of CUL1, SKP1, RBX1 and FBXO38. Interacts with KLF7. Interacts with PDCD1/PD-1. Expressed at high levels in embryo (developing brain, spinal cord, branchial arms and limbs). Widely expressed at low levels in adult tissues, with highest expression in testis. Expressed in postmeiotic spermatids.

It localises to the cytoplasm. Its subcellular location is the cytosol. It is found in the nucleus. It participates in protein modification; protein ubiquitination. Functionally, substrate recognition component of a SCF (SKP1-CUL1-F-box protein) E3 ubiquitin-protein ligase complex which mediates the ubiquitination and subsequent proteasomal degradation of PDCD1/PD-1, thereby regulating T-cells-mediated immunity. Required for anti-tumor activity of T-cells by promoting the degradation of PDCD1/PD-1; the PDCD1-mediated inhibitory pathway being exploited by tumors to attenuate anti-tumor immunity and facilitate tumor survival. May indirectly stimulate the activity of transcription factor KLF7, a regulator of neuronal differentiation, without promoting KLF7 ubiquitination. The polypeptide is F-box only protein 38 (Mus musculus (Mouse)).